The primary structure comprises 89 residues: Small ribosomal subunit protein uS15 (89 aa).

The protein belongs to the universal ribosomal protein uS15 family. Part of the 30S ribosomal subunit. Forms a bridge to the 50S subunit in the 70S ribosome, contacting the 23S rRNA.

One of the primary rRNA binding proteins, it binds directly to 16S rRNA where it helps nucleate assembly of the platform of the 30S subunit by binding and bridging several RNA helices of the 16S rRNA. In terms of biological role, forms an intersubunit bridge (bridge B4) with the 23S rRNA of the 50S subunit in the ribosome. The polypeptide is Small ribosomal subunit protein uS15 (Chlorobium phaeovibrioides (strain DSM 265 / 1930) (Prosthecochloris vibrioformis (strain DSM 265))).